Consider the following 716-residue polypeptide: Probable basic-leucine zipper transcription factor O (716 aa).

The stretch at Leu20–Asp142 forms a coiled coil. The tract at residues Ser173 to Asn233 is disordered. Residues Lys381–Asp444 form the bZIP domain. Residues Lys387–Lys403 form a basic motif region. The tract at residues Ile406–Leu413 is leucine-zipper.

This sequence belongs to the bZIP family.

The protein resides in the nucleus. In terms of biological role, probable transcriptional regulator. This is Probable basic-leucine zipper transcription factor O (bzpO) from Dictyostelium discoideum (Social amoeba).